Here is a 338-residue protein sequence, read N- to C-terminus: Adenylosuccinate synthetase (338 aa).

GTP contacts are provided by residues G12–K18 and G42–T44. D13 functions as the Proton acceptor in the catalytic mechanism. Mg(2+) is bound by residues D13 and G42. IMP-binding positions include D13 to K16, N40 to H43, T127, R141, Q179, T194, and R256. The active-site Proton donor is the H43. T252–R258 lines the substrate pocket. Residues R258, C284–D286, and S324–G326 each bind GTP.

The protein belongs to the adenylosuccinate synthetase family. In terms of assembly, homodimer. The cofactor is Mg(2+).

It localises to the cytoplasm. The catalysed reaction is IMP + L-aspartate + GTP = N(6)-(1,2-dicarboxyethyl)-AMP + GDP + phosphate + 2 H(+). The protein operates within purine metabolism; AMP biosynthesis via de novo pathway; AMP from IMP: step 1/2. Its function is as follows. Plays an important role in the de novo pathway of purine nucleotide biosynthesis. Catalyzes the first committed step in the biosynthesis of AMP from IMP. This Methanococcus maripaludis (strain DSM 14266 / JCM 13030 / NBRC 101832 / S2 / LL) protein is Adenylosuccinate synthetase.